Here is an 806-residue protein sequence, read N- to C-terminus: Leucine--tRNA ligase (806 aa).

Residues 54 to 64 carry the 'HIGH' region motif; it reads SYPSGDLHMGH. Positions 571-575 match the 'KMSKS' region motif; that stretch reads KMSKS. Lysine 574 contacts ATP.

Belongs to the class-I aminoacyl-tRNA synthetase family.

The protein resides in the cytoplasm. It catalyses the reaction tRNA(Leu) + L-leucine + ATP = L-leucyl-tRNA(Leu) + AMP + diphosphate. The polypeptide is Leucine--tRNA ligase (Tropheryma whipplei (strain Twist) (Whipple's bacillus)).